The chain runs to 140 residues: ATP synthase epsilon chain (140 aa).

It belongs to the ATPase epsilon chain family. As to quaternary structure, F-type ATPases have 2 components, CF(1) - the catalytic core - and CF(0) - the membrane proton channel. CF(1) has five subunits: alpha(3), beta(3), gamma(1), delta(1), epsilon(1). CF(0) has three main subunits: a, b and c.

The protein resides in the cell inner membrane. In terms of biological role, produces ATP from ADP in the presence of a proton gradient across the membrane. The protein is ATP synthase epsilon chain of Neisseria meningitidis serogroup A / serotype 4A (strain DSM 15465 / Z2491).